A 293-amino-acid polypeptide reads, in one-letter code: Phosphate import ATP-binding protein PstB (293 aa).

In terms of domain architecture, ABC transporter spans 46–288 (MTCRKVDVHY…PGHQLTEDYI (243 aa)). 78 to 85 (GPSGCGKS) contributes to the ATP binding site.

The protein belongs to the ABC transporter superfamily. Phosphate importer (TC 3.A.1.7) family. As to quaternary structure, the complex is composed of two ATP-binding proteins (PstB), two transmembrane proteins (PstC and PstA) and a solute-binding protein (PstS).

The protein localises to the cell inner membrane. It catalyses the reaction phosphate(out) + ATP + H2O = ADP + 2 phosphate(in) + H(+). Functionally, part of the ABC transporter complex PstSACB involved in phosphate import. Responsible for energy coupling to the transport system. In Desulfotalea psychrophila (strain LSv54 / DSM 12343), this protein is Phosphate import ATP-binding protein PstB.